The primary structure comprises 1007 residues: Glutamate receptor ionotropic, delta-2 (1007 aa).

A signal peptide spans Met-1–Ser-23. The tract at residues Asp-24–Arg-345 is interaction with CBLN1 homotrimer. The Extracellular portion of the chain corresponds to Asp-24–Asp-566. 3 disulfides stabilise this stretch: Cys-83–Cys-355, Cys-99–Cys-131, and Cys-298–Cys-310. An N-linked (GlcNAc...) asparagine glycan is attached at Asn-293. The N-linked (GlcNAc...) asparagine glycan is linked to Asn-426. The helical transmembrane segment at Leu-567–Leu-587 threads the bilayer. Topologically, residues Asn-588–Gly-635 are cytoplasmic. The helical transmembrane segment at Ala-636–Leu-656 threads the bilayer. Residues Thr-657–Ser-830 lie on the Extracellular side of the membrane. N-linked (GlcNAc...) asparagine glycosylation is found at Asn-713 and Asn-716. The chain crosses the membrane as a helical span at residues Leu-831–Leu-851. Residues Glu-852–Ile-1007 are Cytoplasmic-facing. A Phosphoserine modification is found at Ser-883. Thr-886 bears the Phosphothreonine mark. Residue Ser-890 is modified to Phosphoserine. Residues Asp-921–Pro-991 are interaction with AP4M1. Residues Thr-1005 to Ile-1007 carry the PDZ-binding motif. Ser-1006 is modified (phosphoserine).

It belongs to the glutamate-gated ion channel (TC 1.A.10.1) family. GRID2 subfamily. Tetramer; dimer of dimers. Interacts with AP4M1. Interacts with EML2. Interacts with MAGI2 (via PDZ domains). Interacts with BECN1, GOPC, GRID2IP, SHANK1 and SHANK2. Interacts with CBLN2, but not with CBLN4. Interacts with CBLN1 (via C1q domain); the interaction is CBLN1-NRX1 complex formation-dependent; CBLN1-binding is calcium-independent; CBLN1 hexamers anchor GRID2 N-terminal domain dimers to monomeric NRXN1 isoform beta; promotes synaptogenesis and mediates the D-Serine-dependent long term depression signals and AMPA receptor endocytosis. As to expression, expressed at high levels in the cerebellar Purkinje cell layer, almost absent in the forebrain.

The protein resides in the postsynaptic cell membrane. It catalyses the reaction Ca(2+)(in) = Ca(2+)(out). The enzyme catalyses Na(+)(in) = Na(+)(out). Its function is as follows. Member of the ionotropic glutamate receptor family, which plays a crucial role in synaptic organization and signal transduction in the central nervous system. Although it shares structural features with ionotropic glutamate receptors, does not bind glutamate as a primary ligand. Promotes synaptogenesis and mediates the D-Serine-dependent long term depression signals and AMPA receptor endocytosis of cerebellar parallel fiber-Purkinje cell (PF-PC) synapses through the NRX1B-CBLN1-GRID2 triad complex. In the presence of neurexins and cerebellins, forms cation-selective channels that are proposed to be gated by glycine and D-serine. However, recent research disputes this ligand-gated cation channel activity. Cation-selective ion channel activity can be triggered by GRM1 in Purkinje cells. The sequence is that of Glutamate receptor ionotropic, delta-2 (Grid2) from Rattus norvegicus (Rat).